Consider the following 480-residue polypeptide: Sulfate adenylyltransferase subunit 1 (480 aa).

One can recognise a tr-type G domain in the interval 30–248 (KGLLRFLTCG…TVDVKKEASK (219 aa)). The interval 39–46 (GSVDDGKS) is G1. 39–46 (GSVDDGKS) contributes to the GTP binding site. Residues 97-101 (GITID) form a G2 region. The G3 stretch occupies residues 118 to 121 (DTPG). Residues 118 to 122 (DTPGH) and 173 to 176 (NKMD) contribute to the GTP site. Positions 173 to 176 (NKMD) are G4. Residues 211-213 (SAL) are G5.

This sequence belongs to the TRAFAC class translation factor GTPase superfamily. Classic translation factor GTPase family. CysN/NodQ subfamily. As to quaternary structure, heterodimer composed of CysD, the smaller subunit, and CysN.

It catalyses the reaction sulfate + ATP + H(+) = adenosine 5'-phosphosulfate + diphosphate. It functions in the pathway sulfur metabolism; hydrogen sulfide biosynthesis; sulfite from sulfate: step 1/3. With CysD forms the ATP sulfurylase (ATPS) that catalyzes the adenylation of sulfate producing adenosine 5'-phosphosulfate (APS) and diphosphate, the first enzymatic step in sulfur assimilation pathway. APS synthesis involves the formation of a high-energy phosphoric-sulfuric acid anhydride bond driven by GTP hydrolysis by CysN coupled to ATP hydrolysis by CysD. This Photorhabdus laumondii subsp. laumondii (strain DSM 15139 / CIP 105565 / TT01) (Photorhabdus luminescens subsp. laumondii) protein is Sulfate adenylyltransferase subunit 1.